The chain runs to 280 residues: Phosphatidylglycerol--prolipoprotein diacylglyceryl transferase (280 aa).

The next 3 membrane-spanning stretches (helical) occupy residues 15–35 (IFSI…IFAL), 60–80 (FIGL…PVFF), and 90–110 (IWEG…VLLF). Arg-138 contacts a 1,2-diacyl-sn-glycero-3-phospho-(1'-sn-glycerol). Transmembrane regions (helical) follow at residues 217–237 (MPFG…RIFL) and 257–277 (GQLL…NIYV).

The protein belongs to the Lgt family.

It is found in the cell membrane. The enzyme catalyses L-cysteinyl-[prolipoprotein] + a 1,2-diacyl-sn-glycero-3-phospho-(1'-sn-glycerol) = an S-1,2-diacyl-sn-glyceryl-L-cysteinyl-[prolipoprotein] + sn-glycerol 1-phosphate + H(+). It participates in protein modification; lipoprotein biosynthesis (diacylglyceryl transfer). Functionally, catalyzes the transfer of the diacylglyceryl group from phosphatidylglycerol to the sulfhydryl group of the N-terminal cysteine of a prolipoprotein, the first step in the formation of mature lipoproteins. In Buchnera aphidicola subsp. Baizongia pistaciae (strain Bp), this protein is Phosphatidylglycerol--prolipoprotein diacylglyceryl transferase.